Here is a 567-residue protein sequence, read N- to C-terminus: MSDLEAPLRPKRKKIWVDYFVKFRWILVIFVVLPISFTLYFLTYLGDVRSEWKSFKTRQKEHDENVQKVVNRLKKRNPSKDGLVCTARKPWVAVGMRNVDYKRARHFEVDLSPFRNILDIDKERMIARVEPLVNMGQITRVTVPMNLALAVVAELDDLTVGGLINGYGIEGSSHKYGLFSDTVVAFEIILADGSLVKATKDNEYSDLFYAIPWSQGTLGLLVAAEVKLIPIKEYMKLTYKPVVGNLKDIAQAYSDSFAPRDGDQDNDEKVPDFVETMIYSPTRAVCMTGRYASKEEAKKKGNKINNVGWWYKTWFYQHAETALKKGLFVEYIPTREYYHRHTRCLYWEGKLILPFGDQFSFRFLFGWLMPPKVSLLKATQGEAIRNYYHEMHVIQDMLVPLYKVGDALEWSDREMEIYPIWLCPHKLFKLPIKTMIYPEAGFELQRRQGDTQNAQMFTDVGVYYAPGPVLRGEVFDGAEAVRKMESWMIENHCFQPQYAVSELNEKNFWRMFDAGLYEHCRRKYGAVGTFMSVYYKCKKGRKTEKEVREAEQAHLDTAYPEVDQPPD.

Topologically, residues 1–24 (MSDLEAPLRPKRKKIWVDYFVKFR) are lumenal. The chain crosses the membrane as a helical; Signal-anchor span at residues 25–45 (WILVIFVVLPISFTLYFLTYL). Residues 45 to 231 (LGDVRSEWKS…VAAEVKLIPI (187 aa)) form the FAD-binding PCMH-type domain. Residues 46–567 (GDVRSEWKSF…AYPEVDQPPD (522 aa)) are Cytoplasmic-facing. An interaction with calmodulin region spans residues 520–541 (CRRKYGAVGTFMSVYYKCKKGR). The disordered stretch occupies residues 548–567 (REAEQAHLDTAYPEVDQPPD).

Belongs to the DIMINUTO family. As to expression, highly expressed in the apical region and root tips and lower levels in immature and mature internodes and leaves.

The protein localises to the membrane. The catalysed reaction is lathosterol + NADP(+) = 5alpha-cholesta-7,24-dien-3beta-ol + NADPH + H(+). Functionally, plays a critical role in the general process of plant cell elongation. The sequence is that of Delta(24)-sterol reductase (DIM) from Pisum sativum (Garden pea).